The chain runs to 699 residues: Elongation factor G (699 aa).

Residues 8 to 289 (ERYRNIGISA…AVVEYMPAPT (282 aa)) enclose the tr-type G domain. Residues 17 to 24 (AHIDAGKT), 88 to 92 (DTPGH), and 142 to 145 (NKMD) each bind GTP.

It belongs to the TRAFAC class translation factor GTPase superfamily. Classic translation factor GTPase family. EF-G/EF-2 subfamily.

It localises to the cytoplasm. Its function is as follows. Catalyzes the GTP-dependent ribosomal translocation step during translation elongation. During this step, the ribosome changes from the pre-translocational (PRE) to the post-translocational (POST) state as the newly formed A-site-bound peptidyl-tRNA and P-site-bound deacylated tRNA move to the P and E sites, respectively. Catalyzes the coordinated movement of the two tRNA molecules, the mRNA and conformational changes in the ribosome. This is Elongation factor G from Variovorax paradoxus (strain S110).